Reading from the N-terminus, the 910-residue chain is Eukaryotic translation initiation factor 3 subunit C (910 aa).

The tract at residues 1–21 (MSRFFANGSDSESESSEDEIQ) is disordered. A compositionally biased stretch (acidic residues) spans 11–20 (SESESSEDEI). Residues Ser-34, Ser-165, Ser-176, and Ser-185 each carry the phosphoserine modification. Residues 157–279 (FREAPDQESE…IRKRAEDDED (123 aa)) form a disordered region. Positions 162–186 (DQESEAEDEVVALESDGGDAGDDSD) are enriched in acidic residues. Residues 188-207 (GVKPTEAAPKAVKTAPAKAA) show a composition bias toward low complexity. Residues 209 to 235 (ADDDDSDDSIDWDSDSESETESSDDEN) are compositionally biased toward acidic residues. The segment covering 240–268 (MRERFLKRTTEKEEKDDDKRKDKRKEQKI) has biased composition (basic and acidic residues). The PCI domain occupies 639 to 815 (FHMHINLELL…ETVVMHRSEP (177 aa)). A disordered region spans residues 847-910 (FFQRGNMGNR…QQQVQTIDEE (64 aa)). Over residues 862 to 874 (NRNQNNQGGNWLG) the composition is skewed to low complexity. A compositionally biased stretch (basic residues) spans 882 to 891 (RNRNQRGHHK). The segment covering 895-910 (DRQQQQQQQVQTIDEE) has biased composition (low complexity).

Belongs to the eIF-3 subunit C family. In terms of assembly, component of the eukaryotic translation initiation factor 3 (eIF-3) complex. The eIF-3 complex interacts with pix.

It localises to the cytoplasm. In terms of biological role, component of the eukaryotic translation initiation factor 3 (eIF-3) complex, which is involved in protein synthesis of a specialized repertoire of mRNAs and, together with other initiation factors, stimulates binding of mRNA and methionyl-tRNAi to the 40S ribosome. The eIF-3 complex specifically targets and initiates translation of a subset of mRNAs involved in cell proliferation. This chain is Eukaryotic translation initiation factor 3 subunit C, found in Drosophila erecta (Fruit fly).